The chain runs to 84 residues: Small ribosomal subunit protein uS17 (84 aa).

The protein belongs to the universal ribosomal protein uS17 family. In terms of assembly, part of the 30S ribosomal subunit.

One of the primary rRNA binding proteins, it binds specifically to the 5'-end of 16S ribosomal RNA. In Borrelia hermsii (strain HS1 / DAH), this protein is Small ribosomal subunit protein uS17.